A 365-amino-acid chain; its full sequence is Transcription factor TCP2 (365 aa).

The 59-residue stretch at 42 to 100 (GKDRHSKVLTSKGPRDRRVRLSVSTALQFYDLQDRLGYDQPSKAVEWLIKAAEDSISEL) folds into the TCP domain. The segment covering 130–150 (KSACSSNSDTSKNSSGLSLSR) has biased composition (low complexity). Disordered regions lie at residues 130-202 (KSAC…SAPS) and 220-245 (QTHFPISTNSHPFSSISDHHHHHPHH). One can recognise a R domain in the interval 151 to 172 (SELRDKARERARERTAKETKER). The span at 151–176 (SELRDKARERARERTAKETKERDHNH) shows a compositional bias: basic and acidic residues. A compositionally biased stretch (polar residues) spans 177–202 (TSFTDLLNSGSDPVNSNRQWMASAPS).

Interacts with SPL. Interacts with CRY1. Expressed in cotyledons, particularly in the vascular region, in leaves, roots, buds, flowers and immature siliques.

It is found in the nucleus. Its function is as follows. Plays a pivotal role in the control of morphogenesis of shoot organs by negatively regulating the expression of boundary-specific genes such as CUC genes, probably through the induction of miRNA (e.g. miR164). Participates in ovule development. Promotes light-regulated transcription of CHS, CAB, HYH and HY5. Positively regulates photomorphogenesis (e.g. hypocotyl elongation inhibition and cotyledon opening in response to blue light). The sequence is that of Transcription factor TCP2 from Arabidopsis thaliana (Mouse-ear cress).